Reading from the N-terminus, the 540-residue chain is GMP synthase [glutamine-hydrolyzing] (540 aa).

The Glutamine amidotransferase type-1 domain occupies Leu26 to Thr216. The active-site Nucleophile is Cys103. Residues His190 and Glu192 contribute to the active site. The GMPS ATP-PPase domain occupies Trp217–Arg415. Ser244–Ser250 serves as a coordination point for ATP.

In terms of assembly, homodimer.

It catalyses the reaction XMP + L-glutamine + ATP + H2O = GMP + L-glutamate + AMP + diphosphate + 2 H(+). It participates in purine metabolism; GMP biosynthesis; GMP from XMP (L-Gln route): step 1/1. Catalyzes the synthesis of GMP from XMP. This chain is GMP synthase [glutamine-hydrolyzing], found in Nostoc punctiforme (strain ATCC 29133 / PCC 73102).